We begin with the raw amino-acid sequence, 189 residues long: UPF0301 protein Plut_0637 (189 aa).

Belongs to the UPF0301 (AlgH) family.

In Chlorobium luteolum (strain DSM 273 / BCRC 81028 / 2530) (Pelodictyon luteolum), this protein is UPF0301 protein Plut_0637.